The following is a 484-amino-acid chain: Glutamate--tRNA ligase (484 aa).

The 'HIGH' region motif lies at Pro11–Asn21. The 'KMSKS' region motif lies at Lys252–Arg256. Lys255 serves as a coordination point for ATP.

This sequence belongs to the class-I aminoacyl-tRNA synthetase family. Glutamate--tRNA ligase type 1 subfamily. As to quaternary structure, monomer.

It localises to the cytoplasm. The enzyme catalyses tRNA(Glu) + L-glutamate + ATP = L-glutamyl-tRNA(Glu) + AMP + diphosphate. Its function is as follows. Catalyzes the attachment of glutamate to tRNA(Glu) in a two-step reaction: glutamate is first activated by ATP to form Glu-AMP and then transferred to the acceptor end of tRNA(Glu). The protein is Glutamate--tRNA ligase of Staphylococcus saprophyticus subsp. saprophyticus (strain ATCC 15305 / DSM 20229 / NCIMB 8711 / NCTC 7292 / S-41).